Reading from the N-terminus, the 431-residue chain is Tol-Pal system protein TolB (431 aa).

An N-terminal signal peptide occupies residues 1 to 26; sequence MSLMTKLGFRALVASCLITAGSAANA. The disordered stretch occupies residues 406–431; the sequence is DGSAPPQILSVQGGSVREPSWGPFMQ.

It belongs to the TolB family. In terms of assembly, the Tol-Pal system is composed of five core proteins: the inner membrane proteins TolA, TolQ and TolR, the periplasmic protein TolB and the outer membrane protein Pal. They form a network linking the inner and outer membranes and the peptidoglycan layer.

The protein localises to the periplasm. Its function is as follows. Part of the Tol-Pal system, which plays a role in outer membrane invagination during cell division and is important for maintaining outer membrane integrity. This Burkholderia orbicola (strain AU 1054) protein is Tol-Pal system protein TolB.